Reading from the N-terminus, the 446-residue chain is Tubulin beta-3 chain (446 aa).

Positions 11, 69, 138, 142, 143, 144, 204, and 226 each coordinate GTP. Glu69 contributes to the Mg(2+) binding site. Residues 421 to 446 (EYQQYQDATAEEEDYEEEEEDEEVAA) are disordered. Over residues 429 to 446 (TAEEEDYEEEEEDEEVAA) the composition is skewed to acidic residues.

The protein belongs to the tubulin family. As to quaternary structure, dimer of alpha and beta chains. A typical microtubule is a hollow water-filled tube with an outer diameter of 25 nm and an inner diameter of 15 nM. Alpha-beta heterodimers associate head-to-tail to form protofilaments running lengthwise along the microtubule wall with the beta-tubulin subunit facing the microtubule plus end conferring a structural polarity. Microtubules usually have 13 protofilaments but different protofilament numbers can be found in some organisms and specialized cells. It depends on Mg(2+) as a cofactor. Expressed in roots, second node, leaf sheaths, and suspension cultured cells.

It is found in the cytoplasm. Its subcellular location is the cytoskeleton. Functionally, tubulin is the major constituent of microtubules, a cylinder consisting of laterally associated linear protofilaments composed of alpha- and beta-tubulin heterodimers. Microtubules grow by the addition of GTP-tubulin dimers to the microtubule end, where a stabilizing cap forms. Below the cap, tubulin dimers are in GDP-bound state, owing to GTPase activity of alpha-tubulin. The protein is Tubulin beta-3 chain (TUBB3) of Oryza sativa subsp. japonica (Rice).